We begin with the raw amino-acid sequence, 319 residues long: D-alanine--D-alanine ligase B (319 aa).

The ATP-grasp domain occupies 117–312 (KQVWQSLGPA…FQQLVLAILA (196 aa)). 143–198 (ATELGFPLIVKPAHEGSSIGMAKVNSVDELIAAWKAASTYDSQVLVEQWIQGPEFT) is a binding site for ATP. Mg(2+) contacts are provided by aspartate 266, glutamate 279, and asparagine 281.

This sequence belongs to the D-alanine--D-alanine ligase family. Mg(2+) serves as cofactor. Requires Mn(2+) as cofactor.

The protein localises to the cytoplasm. It catalyses the reaction 2 D-alanine + ATP = D-alanyl-D-alanine + ADP + phosphate + H(+). It participates in cell wall biogenesis; peptidoglycan biosynthesis. Cell wall formation. The polypeptide is D-alanine--D-alanine ligase B (Pseudomonas syringae pv. tomato (strain ATCC BAA-871 / DC3000)).